The following is a 316-amino-acid chain: Alkaline ceramidase YPC1 (316 aa).

Topologically, residues 1–36 (MGIFRWNYPESSVPGVWGETTSTIDWCEENYVVSPY) are lumenal. A disulfide bridge connects residues cysteine 27 and cysteine 219. An intramembrane segment occupies 37–57 (IAEWSNTLTNSVFILSAIYTT). Residues 58–68 (YSAYKNKLEKR) are Lumenal-facing. Residues 69–89 (FLLIGFGYGLVGVGSWLFHMT) lie within the membrane without spanning it. The Lumenal portion of the chain corresponds to 90–93 (LKYR). Residues 94–114 (FQLLDELPMIYAMCIPTWSLV) traverse the membrane as a helical segment. The Cytoplasmic segment spans residues 115–135 (CEAKEALLNGDNHKKVPLFEQ). The helical transmembrane segment at 136–156 (IFIGVIIGLAVTTASILYVIY) threads the bilayer. Residues 157-160 (KNVD) lie on the Lumenal side of the membrane. An intramembrane segment occupies 161-181 (IHQILFGVQIVVVAATAGSLT). Residues 182 to 195 (YRYVHDPLAKRNLK) are Lumenal-facing. An intramembrane segment occupies 196-216 (ASMALGAILFLSGYISWLLDI). Over 217 to 228 (HYCSFWVHVRRS) the chain is Lumenal. The helical transmembrane segment at 229-249 (ILALPLGVLLEPHGWWHILTG) threads the bilayer. Residues 250–316 (MGIYFYIVSL…DQSIEVKKEK (67 aa)) are Cytoplasmic-facing.

Belongs to the alkaline ceramidase family.

It is found in the endoplasmic reticulum membrane. It carries out the reaction N-hexanoyl-sphinganine + H2O = hexanoate + sphinganine. It catalyses the reaction sphinganine + hexadecanoate = N-hexadecanoylsphinganine + H2O. The catalysed reaction is N-hexadecanoyl-(4R)-hydroxysphinganine + H2O = (4R)-hydroxysphinganine + hexadecanoate. The enzyme catalyses N-hexadecanoylsphing-4-enine + H2O = sphing-4-enine + hexadecanoate. It carries out the reaction an N-acyl-(4R)-4-hydroxysphinganine + H2O = (4R)-hydroxysphinganine + a fatty acid. Functionally, alkaline ceramidase that hydrolyzes phytoceramide and also dihydroceramide into phytosphingosine or dihydrosphingosine. Prefers phytoceramide. Also has reverse activity as acyl-CoA-independent ceramide synthase, catalyzing synthesis of phytoceramide and dihydroceramide from palmitic acid and phytosphingosine or dihydrosphingosine. Is not responsible for the breakdown of unsaturated ceramide. Preferentially uses very long chain fatty acids (C-24 and C-26) in vivo compared to C-16 in vitro. This Saccharomyces cerevisiae (strain ATCC 204508 / S288c) (Baker's yeast) protein is Alkaline ceramidase YPC1 (YPC1).